We begin with the raw amino-acid sequence, 428 residues long: MEFLDLAPCATLRGTVALPGSKSISNRMLLLAALATGKTQVHGVLEADDTDRMLEALQQLGIRLAQQAHSRTFCIEGCDGRWPVRQADLFLGNAGTAFRPLTAALALAGGDYHLHGIARMHERPIGDLVEALQGLGAVIEYAGTPGYPPLHIHPGHVTPGSTTRVKGNVSSQFLSALLMALPLAGGGTVEVEGELISKPYVDLTLRLIERFGVTVGRDGYSRFTAEAGSHYRSPGAIHVEGDASSASYFLAAGALGGGPVRVTGVGRNSIQGDIRFADALAAMGAGIDMGDDWIEAQAPASGRLRAVTLDCNHIPDAAMTLAVAALFANGTTTLTNIASWRVKETDRIAAMATELGKLGALVETGHDFIRITPPDQLTPGAAIDTYDDHRMAMCFSLASLAVPVRINDPRCVAKTFPGYFDAFASLRA.

3-phosphoshikimate contacts are provided by Lys-22, Ser-23, and Arg-27. Position 22 (Lys-22) interacts with phosphoenolpyruvate. Gly-95 and Arg-123 together coordinate phosphoenolpyruvate. Ser-170, Ser-171, Gln-172, Ser-197, Asp-316, and Lys-343 together coordinate 3-phosphoshikimate. A phosphoenolpyruvate-binding site is contributed by Gln-172. Asp-316 functions as the Proton acceptor in the catalytic mechanism. The phosphoenolpyruvate site is built by Arg-347, Arg-390, and Lys-414.

This sequence belongs to the EPSP synthase family. Monomer.

Its subcellular location is the cytoplasm. It carries out the reaction 3-phosphoshikimate + phosphoenolpyruvate = 5-O-(1-carboxyvinyl)-3-phosphoshikimate + phosphate. Its pathway is metabolic intermediate biosynthesis; chorismate biosynthesis; chorismate from D-erythrose 4-phosphate and phosphoenolpyruvate: step 6/7. Its function is as follows. Catalyzes the transfer of the enolpyruvyl moiety of phosphoenolpyruvate (PEP) to the 5-hydroxyl of shikimate-3-phosphate (S3P) to produce enolpyruvyl shikimate-3-phosphate and inorganic phosphate. In Laribacter hongkongensis (strain HLHK9), this protein is 3-phosphoshikimate 1-carboxyvinyltransferase.